The following is a 78-amino-acid chain: MKLTCMMIIAVLFLTAWTFVMADDPRDEPEARDEMNPAASKLNERGCLEVDYFCGIPFANNGLCCSGNCVFVCTPQGK.

The first 22 residues, 1 to 22, serve as a signal peptide directing secretion; the sequence is MKLTCMMIIAVLFLTAWTFVMA. The propeptide occupies 23 to 45; it reads DDPRDEPEARDEMNPAASKLNER. Cystine bridges form between Cys-47–Cys-65, Cys-54–Cys-69, and Cys-64–Cys-73. Position 76 is a glutamine amide (Gln-76).

In terms of tissue distribution, expressed by the venom duct.

The protein localises to the secreted. Functionally, omega-conotoxins act at presynaptic membranes, they bind and block voltage-gated calcium channels (Cav). Acts on high voltage-activated (HVA) calcium currents in molluscan neurons. This is Omega-conotoxin PnVIA from Conus pennaceus (Feathered cone).